A 376-amino-acid chain; its full sequence is N-acetyldiaminopimelate deacetylase (376 aa).

Asp69 is an active-site residue. Glu128 functions as the Proton acceptor in the catalytic mechanism.

The protein belongs to the peptidase M20A family. N-acetyldiaminopimelate deacetylase subfamily.

The enzyme catalyses N-acetyl-(2S,6S)-2,6-diaminopimelate + H2O = (2S,6S)-2,6-diaminopimelate + acetate. It participates in amino-acid biosynthesis; L-lysine biosynthesis via DAP pathway; LL-2,6-diaminopimelate from (S)-tetrahydrodipicolinate (acetylase route): step 3/3. In terms of biological role, catalyzes the conversion of N-acetyl-diaminopimelate to diaminopimelate and acetate. The protein is N-acetyldiaminopimelate deacetylase of Bacillus cereus (strain 03BB102).